The primary structure comprises 165 residues: Nucleotide-binding protein PMM0481 (165 aa).

It belongs to the YajQ family.

Its function is as follows. Nucleotide-binding protein. In Prochlorococcus marinus subsp. pastoris (strain CCMP1986 / NIES-2087 / MED4), this protein is Nucleotide-binding protein PMM0481.